Here is a 219-residue protein sequence, read N- to C-terminus: Octanoyltransferase (219 aa).

Positions 37–219 constitute a BPL/LPL catalytic domain; the sequence is EHSPDQLWIL…DFNDVQVILQ (183 aa). Substrate is bound by residues 76 to 83, 143 to 145, and 156 to 158; these read RGGQVTWH, SLG, and GLA. Residue C174 is the Acyl-thioester intermediate of the active site.

This sequence belongs to the LipB family.

The protein localises to the cytoplasm. The catalysed reaction is octanoyl-[ACP] + L-lysyl-[protein] = N(6)-octanoyl-L-lysyl-[protein] + holo-[ACP] + H(+). It functions in the pathway protein modification; protein lipoylation via endogenous pathway; protein N(6)-(lipoyl)lysine from octanoyl-[acyl-carrier-protein]: step 1/2. Its function is as follows. Catalyzes the transfer of endogenously produced octanoic acid from octanoyl-acyl-carrier-protein onto the lipoyl domains of lipoate-dependent enzymes. Lipoyl-ACP can also act as a substrate although octanoyl-ACP is likely to be the physiological substrate. The protein is Octanoyltransferase of Acinetobacter baylyi (strain ATCC 33305 / BD413 / ADP1).